The primary structure comprises 239 residues: Carboxy-S-adenosyl-L-methionine synthase (239 aa).

Residues Y35, 64–66 (GCS), 88–89 (DN), and R195 contribute to the S-adenosyl-L-methionine site.

It belongs to the class I-like SAM-binding methyltransferase superfamily. Cx-SAM synthase family. Homodimer.

The enzyme catalyses prephenate + S-adenosyl-L-methionine = carboxy-S-adenosyl-L-methionine + 3-phenylpyruvate + H2O. Functionally, catalyzes the conversion of S-adenosyl-L-methionine (SAM) to carboxy-S-adenosyl-L-methionine (Cx-SAM). This chain is Carboxy-S-adenosyl-L-methionine synthase, found in Helicobacter pylori (strain G27).